The primary structure comprises 971 residues: Outer capsid protein VP2 (971 aa).

Belongs to the orbivirus VP2 family.

The protein resides in the virion. Functionally, the VP2 protein is one of the two proteins (with VP5) which constitute the virus particle outer capsid. It is the major target of the host immunogenic response. This is Outer capsid protein VP2 (Segment-2) from Epizootic hemorrhagic disease virus 1 (EHDV-1).